A 429-amino-acid chain; its full sequence is Acetyltransferase pyr8 (429 aa).

Helical transmembrane passes span 12-32, 39-56, 69-89, 154-174, 221-241, 300-320, 324-344, 365-385, and 409-429; these read IAQE…VIIT, LRLA…RFSL, GVAA…LLIT, YVLR…LIHM, VCLN…RISA, IFFT…ILGI, GSGA…EDGV, LVGF…YLYP, and VAQK…GGEI.

The protein belongs to the wax synthase family.

Its subcellular location is the membrane. It participates in secondary metabolite biosynthesis; terpenoid biosynthesis. Its function is as follows. Acetyltransferase; part of the gene cluster that mediates the biosynthesis of pyripyropene A, a specific human acyl-coenzyme A:cholesterol acyltransferase 2 inhibitor. The first step of the pathway is the synthesis of nicotinyl-CoA from nicotinic acid by the nicotinic acid-CoA ligase pyr1. Nicotinyl-CoA is then a substrate of polyketide synthase pyr2 to produce 4-hydroxy-6-(3-pyridinyl)-2H-pyran-2-one (HPPO) which is further prenylated by the polyprenyl transferase pyr6 to yield farnesyl-HPPO. The next steps consist of an epoxidation of farnesyl-HPPO to epoxyfarnesyl-HPPO by FAD-dependent monooxygenase pyr5 and a cyclization of the terpenoid portion by the terpene cyclase pyr4 to yield deacetyl-pyripyropene E. The 2 cytochrome P450 monooxygenases pyr3 and pyr9, and the 2 acetyltransferases pyr7 and pyr8 are involved in the conversion of deacetyl-pyripyropene E into pyripyropene A through several cycles of oxidation and acetylation steps. Pyr7 acetylates deacetyl-pyripyropene E to pyripyropene E which is oxidized to 11-deacetyl-pyripyropene O by pyr3, which is in turn acetylated into pyripyropene O by pyr8. Pyripyropene O is then oxidized to deacetyl-pyripyropene A by pyr9. Deacetyl-pyripyropene A is finally acetylated to pyripyropene A by pyr8. This Aspergillus fumigatus (strain ATCC MYA-4609 / CBS 101355 / FGSC A1100 / Af293) (Neosartorya fumigata) protein is Acetyltransferase pyr8.